Consider the following 361-residue polypeptide: Nicotinate-nucleotide--dimethylbenzimidazole phosphoribosyltransferase (361 aa).

Glu314 acts as the Proton acceptor in catalysis.

This sequence belongs to the CobT family.

It catalyses the reaction 5,6-dimethylbenzimidazole + nicotinate beta-D-ribonucleotide = alpha-ribazole 5'-phosphate + nicotinate + H(+). The protein operates within nucleoside biosynthesis; alpha-ribazole biosynthesis; alpha-ribazole from 5,6-dimethylbenzimidazole: step 1/2. Functionally, catalyzes the synthesis of alpha-ribazole-5'-phosphate from nicotinate mononucleotide (NAMN) and 5,6-dimethylbenzimidazole (DMB). This Mycobacterium bovis (strain BCG / Pasteur 1173P2) protein is Nicotinate-nucleotide--dimethylbenzimidazole phosphoribosyltransferase.